A 156-amino-acid polypeptide reads, in one-letter code: Small ribosomal subunit protein uS7 (156 aa).

This sequence belongs to the universal ribosomal protein uS7 family. Part of the 30S ribosomal subunit. Contacts proteins S9 and S11.

Functionally, one of the primary rRNA binding proteins, it binds directly to 16S rRNA where it nucleates assembly of the head domain of the 30S subunit. Is located at the subunit interface close to the decoding center, probably blocks exit of the E-site tRNA. This is Small ribosomal subunit protein uS7 from Gloeobacter violaceus (strain ATCC 29082 / PCC 7421).